A 156-amino-acid chain; its full sequence is ATP synthase subunit b (156 aa).

The chain crosses the membrane as a helical span at residues 11-31 (AIAFILFVWFCMKYVWPPLMA).

It belongs to the ATPase B chain family. In terms of assembly, F-type ATPases have 2 components, F(1) - the catalytic core - and F(0) - the membrane proton channel. F(1) has five subunits: alpha(3), beta(3), gamma(1), delta(1), epsilon(1). F(0) has three main subunits: a(1), b(2) and c(10-14). The alpha and beta chains form an alternating ring which encloses part of the gamma chain. F(1) is attached to F(0) by a central stalk formed by the gamma and epsilon chains, while a peripheral stalk is formed by the delta and b chains.

The protein localises to the cell inner membrane. Its function is as follows. F(1)F(0) ATP synthase produces ATP from ADP in the presence of a proton or sodium gradient. F-type ATPases consist of two structural domains, F(1) containing the extramembraneous catalytic core and F(0) containing the membrane proton channel, linked together by a central stalk and a peripheral stalk. During catalysis, ATP synthesis in the catalytic domain of F(1) is coupled via a rotary mechanism of the central stalk subunits to proton translocation. Component of the F(0) channel, it forms part of the peripheral stalk, linking F(1) to F(0). The protein is ATP synthase subunit b of Salmonella agona (strain SL483).